A 239-amino-acid polypeptide reads, in one-letter code: Probable transcriptional regulatory protein LMOf2365_0385 (239 aa).

This sequence belongs to the TACO1 family. YeeN subfamily.

Its subcellular location is the cytoplasm. This Listeria monocytogenes serotype 4b (strain F2365) protein is Probable transcriptional regulatory protein LMOf2365_0385.